A 214-amino-acid chain; its full sequence is MSKSVALLLLCACLASGRHVPTRARRQAGSFTVNSDGTSGAALKVPLTGNDKNVLSAIGSADFNDRHKLSAASAGLALDNVNGHGLSLTGTRIPGFGEQLGVAGKVNLFHNNNHDLSAKAFAIRNSPSAIPNAPNFNTLGGGVDYMFKQKVGASLSAAHSDVINRNDYSAGGKLNLFRSPSSSLDFNAGFKKFDTPFYRSSWEPNVGFSFSKFF.

A signal peptide spans 1-19 (MSKSVALLLLCACLASGRH). A propeptide spanning residues 20–26 (VPTRARR) is cleaved from the precursor.

Belongs to the attacin/sarcotoxin-2 family. Highest expression in fat body and hemocytes and to a much lesser extent in Malpighian tubules, silk gland and midgut.

The protein resides in the secreted. In terms of biological role, hemolymph antibacterial protein. Has a wide spectrum of activity against both Gram-positive and Gram-negative bacteria. The sequence is that of Attacin from Bombyx mori (Silk moth).